Here is a 144-residue protein sequence, read N- to C-terminus: Arsenate reductase ArsI1 (144 aa).

C14 (nucleophile; cysteine thioarsenate intermediate) is an active-site residue.

This sequence belongs to the ArsC family.

It carries out the reaction [glutaredoxin]-dithiol + arsenate + glutathione + H(+) = glutathionyl-S-S-[glutaredoxin] + arsenite + H2O. Functionally, catalyzes the reduction of arsenate [As(V)] to arsenite [As(III)]. Does not constitute the major arsenate reductase in cells: essential only in the absence of ArsC (AC P74313). The polypeptide is Arsenate reductase ArsI1 (Synechocystis sp. (strain ATCC 27184 / PCC 6803 / Kazusa)).